The sequence spans 77 residues: Exodeoxyribonuclease 7 small subunit (77 aa).

Belongs to the XseB family. In terms of assembly, heterooligomer composed of large and small subunits.

It is found in the cytoplasm. It carries out the reaction Exonucleolytic cleavage in either 5'- to 3'- or 3'- to 5'-direction to yield nucleoside 5'-phosphates.. In terms of biological role, bidirectionally degrades single-stranded DNA into large acid-insoluble oligonucleotides, which are then degraded further into small acid-soluble oligonucleotides. The chain is Exodeoxyribonuclease 7 small subunit from Lysinibacillus sphaericus (strain C3-41).